Here is a 518-residue protein sequence, read N- to C-terminus: Sensory neuron membrane protein 1 (518 aa).

Residues 1–8 are Cytoplasmic-facing; that stretch reads MKTAEKLG. The chain crosses the membrane as a helical span at residues 9-29; sequence IIGTTISIFGIGFGWGVFPWL. At 30–456 the chain is on the extracellular side; sequence IRMQIGRVSL…ELFRILQFLD (427 aa). N-linked (GlcNAc...) asparagine glycans are attached at residues Asn64, Asn186, Asn225, Asn316, Asn334, and Asn381. 3 disulfide bridges follow: Cys265–Cys330, Cys294–Cys349, and Cys332–Cys338. A helical membrane pass occupies residues 457–477; sequence VIKWVITLFGAGVVSGGVGLY. Residues 478–518 are Cytoplasmic-facing; that stretch reads YKEKNSLPITPTSSATSKKIDNPTDKTTTHELGHTNFGYIN.

This sequence belongs to the CD36 family.

It is found in the cell membrane. Functionally, plays an olfactory role that is not restricted to pheromone sensitivity. The chain is Sensory neuron membrane protein 1 from Pediculus humanus subsp. corporis (Body louse).